Here is a 492-residue protein sequence, read N- to C-terminus: 2,3-bisphosphoglycerate-independent phosphoglycerate mutase (492 aa).

Mn(2+)-binding residues include D11 and S61. Residue S61 is the Phosphoserine intermediate of the active site. Residues H118, 147 to 148 (RD), R178, R184, 248 to 251 (RNDR), and K320 contribute to the substrate site. Mn(2+) contacts are provided by D386, H390, D427, H428, and H445.

Belongs to the BPG-independent phosphoglycerate mutase family. As to quaternary structure, monomer. Requires Mn(2+) as cofactor.

It catalyses the reaction (2R)-2-phosphoglycerate = (2R)-3-phosphoglycerate. Its pathway is carbohydrate degradation; glycolysis; pyruvate from D-glyceraldehyde 3-phosphate: step 3/5. Its function is as follows. Catalyzes the interconversion of 2-phosphoglycerate and 3-phosphoglycerate. In Campylobacter jejuni subsp. jejuni serotype O:6 (strain 81116 / NCTC 11828), this protein is 2,3-bisphosphoglycerate-independent phosphoglycerate mutase.